The chain runs to 283 residues: Prepilin leader peptidase/N-methyltransferase (283 aa).

The next 7 membrane-spanning stretches (helical) occupy residues 13 to 33 (VWLL…NVVI), 106 to 126 (WRYP…GLLW), 128 to 148 (PGLA…LAAI), 153 to 173 (QLLP…FNLA), 176 to 196 (FVPL…LWLI), 216 to 236 (LLAA…VLIA), and 259 to 279 (LAFG…NVLG).

It belongs to the peptidase A24 family.

The protein localises to the cell inner membrane. It carries out the reaction Typically cleaves a -Gly-|-Phe- bond to release an N-terminal, basic peptide of 5-8 residues from type IV prepilin, and then N-methylates the new N-terminal amino group, the methyl donor being S-adenosyl-L-methionine.. Functionally, plays a role in type II pseudopili formation by proteolytically removing the leader sequence from substrate proteins and subsequently monomethylating the alpha-amino group of the newly exposed N-terminal phenylalanine. Substrates include proteins required for biogenesis of the type II general secretory apparatus. The chain is Prepilin leader peptidase/N-methyltransferase (outO) from Dickeya chrysanthemi (Pectobacterium chrysanthemi).